We begin with the raw amino-acid sequence, 232 residues long: Putative N-acetylmannosamine-6-phosphate 2-epimerase (232 aa).

The protein belongs to the NanE family.

The catalysed reaction is an N-acyl-D-glucosamine 6-phosphate = an N-acyl-D-mannosamine 6-phosphate. Its pathway is amino-sugar metabolism; N-acetylneuraminate degradation; D-fructose 6-phosphate from N-acetylneuraminate: step 3/5. Converts N-acetylmannosamine-6-phosphate (ManNAc-6-P) to N-acetylglucosamine-6-phosphate (GlcNAc-6-P). This chain is Putative N-acetylmannosamine-6-phosphate 2-epimerase, found in Corynebacterium glutamicum (strain R).